A 249-amino-acid chain; its full sequence is uncharacterized protein (249 aa).

The N-terminal stretch at 1 to 20 is a signal peptide; sequence MSNQNKVLSLGLLLLAAVAA.

Belongs to the IIV-6 117L family.

This is an uncharacterized protein from Acheta domesticus (House cricket).